A 607-amino-acid polypeptide reads, in one-letter code: UvrABC system protein C (607 aa).

The GIY-YIG domain maps to 12-91 (DSPGVYLYKD…IKRYRPRYNI (80 aa)). The UVR domain maps to 200–235 (ENLIKKLKKEMAIASDNLEFERAAKLRDQILALEKI).

Belongs to the UvrC family. In terms of assembly, interacts with UvrB in an incision complex.

It is found in the cytoplasm. Functionally, the UvrABC repair system catalyzes the recognition and processing of DNA lesions. UvrC both incises the 5' and 3' sides of the lesion. The N-terminal half is responsible for the 3' incision and the C-terminal half is responsible for the 5' incision. In Carboxydothermus hydrogenoformans (strain ATCC BAA-161 / DSM 6008 / Z-2901), this protein is UvrABC system protein C.